The sequence spans 547 residues: MQAFDELLTVEQLSFSYEEDEKPVFQDISFELQKGECVLLLGPSGCGKSSLALCLNGLYPEACDGIQSGHVFLFQKPVTDAETSETITQHAGVVFQDPDQQFCMLTVEDEIAFGLENLQIPKEEMTEKINAVLEKLRITHLKEKMISTLSGGQKQKVALACILAMEPELIILDEPTSLLDPFSAREFVHLMKDLQREKGFSLLVIEHQLDEWAPWIERTIVLDKSGKKALDGLTKNLFQHEAETLKKLGIAIPKVCHLQEKLSMPFTLSKEMLFKEPIPAGHVKKKKAPSGESVLEVSSLSFARGQQAIFKDISFSLREGSLTALVGPNGTGKSTLLSVLASLMKPQSGKILLYDQPLQKYKEKELRKRMGFVFQNPEHQFVTDTVYDELLFGQKANAETEKKAQHLLQRFGLAHLADHHPFAISQGQKRRLSVATMLMHDVKVLLLDEPTFGQDARTAAECMEMIQRIKAEGTAVLMITHDMELVSSYADSVLVLHDTGLAFDGSPAQLFSQETGLVQKAKLTLPLLYEWMAFQEEVRDEATVTSH.

ABC transporter domains are found at residues 8-250 and 295-523; these read LTVE…KLGI and LEVS…KAKL. Residues 42–49 and 327–334 contribute to the ATP site; these read GPSGCGKS and GPNGTGKS.

Belongs to the ABC transporter superfamily. The complex is composed of two ATP-binding proteins (YkoD), two transmembrane proteins (YkoC and YkoE) and a solute-binding protein (YkoF).

It localises to the cell membrane. Part of the ABC transporter complex YkoCDEF that could transport hydroxymethylpyrimidine (HMP) and/or thiamine. Could also transport other HMP-containing products. Responsible for energy coupling to the transport system. The sequence is that of Putative HMP/thiamine import ATP-binding protein YkoD (ykoD) from Bacillus subtilis (strain 168).